Consider the following 269-residue polypeptide: Photosystem I assembly factor PSA3, chloroplastic (269 aa).

The transit peptide at 1–37 (MGALPVAHSLALTAAFLPCRRPAAHGRCRRRRYRAVV) directs the protein to the chloroplast.

Its subcellular location is the plastid. It localises to the chloroplast thylakoid membrane. Nuclear genome-encoded factor required for the accumulation of photosystem I (PSI). Functions as a PSI biogenesis factor. Cooperates with PYG7 to promote the stable assembly of PSI in the thylakoid membrane. May target primarily the PsaC subunit. Does not seem to be required for the expression of chloroplast genes encoding PSI subunits. The protein is Photosystem I assembly factor PSA3, chloroplastic of Zea mays (Maize).